Consider the following 305-residue polypeptide: Phosphatidylglycerol--prolipoprotein diacylglyceryl transferase (305 aa).

The next 3 membrane-spanning stretches (helical) occupy residues 10 to 30, 59 to 79, and 92 to 112; these read FLISFTLFGLPIVVRWYGAII, LMLGLVLGIAGARIYYVAFEW, and LTTGGIAIHGAIIGALLSTVI. Position 140 (Arg-140) interacts with a 1,2-diacyl-sn-glycero-3-phospho-(1'-sn-glycerol). Transmembrane regions (helical) follow at residues 182–202 and 260–280; these read LFHPTFLYESVWNLVGVGILL and IRVAQLVSMVAIVVCGVLIFL.

This sequence belongs to the Lgt family.

It is found in the cell membrane. It catalyses the reaction L-cysteinyl-[prolipoprotein] + a 1,2-diacyl-sn-glycero-3-phospho-(1'-sn-glycerol) = an S-1,2-diacyl-sn-glyceryl-L-cysteinyl-[prolipoprotein] + sn-glycerol 1-phosphate + H(+). Its pathway is protein modification; lipoprotein biosynthesis (diacylglyceryl transfer). Catalyzes the transfer of the diacylglyceryl group from phosphatidylglycerol to the sulfhydryl group of the N-terminal cysteine of a prolipoprotein, the first step in the formation of mature lipoproteins. In Chloroflexus aggregans (strain MD-66 / DSM 9485), this protein is Phosphatidylglycerol--prolipoprotein diacylglyceryl transferase.